The primary structure comprises 470 residues: Serine/threonine-protein kinase PEPKR2 (470 aa).

The Protein kinase domain maps to 107 to 355 (YVFGRNIGKG…ADEVLRHPWI (249 aa)). Residues 113–121 (IGKGKFGSV) and K136 each bind ATP. The Proton acceptor role is filled by D224. Residues 377-386 (GSSTCLQNRS) are compositionally biased toward polar residues. Disordered regions lie at residues 377 to 419 (GSST…EEED) and 441 to 464 (RSRV…TSTS). Residues 387–403 (PTEKTDLNRADREKKIP) show a composition bias toward basic and acidic residues. A compositionally biased stretch (polar residues) spans 445 to 464 (CSPTNNPIEQQHSSNLTSTS).

The protein belongs to the protein kinase superfamily. Ser/Thr protein kinase family.

The catalysed reaction is L-seryl-[protein] + ATP = O-phospho-L-seryl-[protein] + ADP + H(+). The enzyme catalyses L-threonyl-[protein] + ATP = O-phospho-L-threonyl-[protein] + ADP + H(+). This is Serine/threonine-protein kinase PEPKR2 (PEPKR2) from Arabidopsis thaliana (Mouse-ear cress).